Reading from the N-terminus, the 147-residue chain is MLDIYERLGTHCHDPVYTTVTLTHEQRDRGRLKLVGENNEEVRVFLERGKPLLVGEFLKSECGKIVQVAGAVEDVAHASCEDWEAFSKACYHLGNRHTKIQIGERWLRIKPDHVLEDMLHMLGLIVTHEEAVFVPESGAYSHGHSHH.

This sequence belongs to the UreE family.

It is found in the cytoplasm. In terms of biological role, involved in urease metallocenter assembly. Binds nickel. Probably functions as a nickel donor during metallocenter assembly. This Marinomonas sp. (strain MWYL1) protein is Urease accessory protein UreE.